The following is a 303-amino-acid chain: Inner kinetochore subunit mal2 (303 aa).

This sequence belongs to the CENP-O/MCM21 family. In terms of assembly, component of the heterotetrameric kinetochore subcomplex COMA, which consists of fta2, fta7, mal2 and mis17. The COMA subcomplex is part of a larger constitutive centromere-associated network (CCAN) (also known as central kinetochore Sim4 complex in fission yeast), which is composed of at least cnl2, cnp3, cnp20, fta1, fta2, fta3, fta4, fta6, fta7, mal2, mhf1, mhf2, mis6, mis15, mis17, sim4 and wip1.

It is found in the nucleus. Its subcellular location is the chromosome. The protein resides in the centromere. It localises to the kinetochore. Functionally, component of the kinetochore, a multiprotein complex that assembles on centromeric DNA and attaches chromosomes to spindle microtubules, mediating chromosome segregation and sister chromatid segregation during meiosis and mitosis. Component of the inner kinetochore COMA complex, which connects centromere-associated proteins and the outer kinetochore. COMA interacts with other inner kinetochore proteins to form the inner kinetochore constitutive centromere-associated network (CCAN), which serves as a structural platform for outer kinetochore assembly. This Schizosaccharomyces pombe (strain 972 / ATCC 24843) (Fission yeast) protein is Inner kinetochore subunit mal2 (mal2).